A 215-amino-acid chain; its full sequence is Nascent polypeptide-associated complex subunit alpha (215 aa).

Positions 1 to 81 (MPGEATETVP…SEKKARKAMS (81 aa)) are disordered. Polar residues predominate over residues 9–28 (VPATEQELPQPQAETGSGTE). Residues 29–42 (SDSDESVPELEEQD) are compositionally biased toward acidic residues. S43 bears the Phosphoserine; by ILK1 mark. Residues 44–57 (TQTATQQAQLAAAA) show a composition bias toward low complexity. Residues 69–80 (QSRSEKKARKAM) form a required for DNA-binding region. Residues 70 to 135 (SRSEKKARKA…AKIEDLSQQA (66 aa)) enclose the NAC-A/B domain. Positions 93–108 (RVTIRKSKNILFVITK) are RNA/DNA-binding. Phosphoserine is present on S132. At K142 the chain carries N6-acetyllysine; alternate. K142 is covalently cross-linked (Glycyl lysine isopeptide (Lys-Gly) (interchain with G-Cter in SUMO2); alternate). T159 carries the phosphothreonine; by GSK3-beta modification. T161 bears the Phosphothreonine mark. Phosphoserine occurs at positions 166, 186, 191, and 203. Residues 176-213 (VEVKDIELVMSQANVSRAKAVRALKNNSNDIVNAIMEL) form the UBA domain.

Belongs to the NAC-alpha family. In terms of assembly, part of the nascent polypeptide-associated complex (NAC), which is a heterodimer of NACA and BTF3 (via NAC-A/B domains). NAC associates with ribosomes through the BTF3/NACB subunit and contacts the ribosomal protein L23, which is positioned near the exiting site. Both subunits can contact nascent polypeptide chains. NACA may also form homodimers, and only this form binds DNA. Interacts with TBP and JUN. In terms of processing, phosphorylation of Ser-43 by ILK during cell adhesion may promote nuclear localization. Phosphorylation of Thr-159 by GSK3B may promote proteasome mediated degradation. In terms of tissue distribution, isoform 1 appears to be ubiquitously expressed.

It is found in the cytoplasm. Its subcellular location is the nucleus. In terms of biological role, prevents inappropriate targeting of non-secretory polypeptides to the endoplasmic reticulum (ER). Binds to nascent polypeptide chains as they emerge from the ribosome and blocks their interaction with the signal recognition particle (SRP), which normally targets nascent secretory peptides to the ER. Also reduces the inherent affinity of ribosomes for protein translocation sites in the ER membrane (M sites). Isoform 1 and isoform 2 appear to bind DNA and play roles in transcription. Isoform 1 may function as a specific coactivator for JUN, acting to stabilize the interaction of JUN homodimers with promoter elements. This chain is Nascent polypeptide-associated complex subunit alpha (Naca), found in Mus musculus (Mouse).